Consider the following 432-residue polypeptide: Bifunctional protein GlmU (432 aa).

Residues 1–223 (MGKKSIIILA…EENFKGVNSK (223 aa)) form a pyrophosphorylase region. Residues 9–12 (LAAG), lysine 23, glutamine 75, and 82–83 (GT) contribute to the UDP-N-acetyl-alpha-D-glucosamine site. Aspartate 103 is a binding site for Mg(2+). Residues glycine 135, glutamate 149, asparagine 164, and asparagine 221 each contribute to the UDP-N-acetyl-alpha-D-glucosamine site. Asparagine 221 serves as a coordination point for Mg(2+). Residues 224 to 244 (VELADAEVIHQNRIKKEFMKA) are linker. Residues 245-432 (GVIMRLPDTI…FYKHFSSKKK (188 aa)) form an N-acetyltransferase region. Residues arginine 308 and lysine 325 each coordinate UDP-N-acetyl-alpha-D-glucosamine. Histidine 336 (proton acceptor) is an active-site residue. 2 residues coordinate UDP-N-acetyl-alpha-D-glucosamine: tyrosine 339 and asparagine 350. Residues 359 to 360 (NY), serine 378, alanine 396, and arginine 413 contribute to the acetyl-CoA site.

In the N-terminal section; belongs to the N-acetylglucosamine-1-phosphate uridyltransferase family. The protein in the C-terminal section; belongs to the transferase hexapeptide repeat family. As to quaternary structure, homotrimer. The cofactor is Mg(2+).

It is found in the cytoplasm. The catalysed reaction is alpha-D-glucosamine 1-phosphate + acetyl-CoA = N-acetyl-alpha-D-glucosamine 1-phosphate + CoA + H(+). The enzyme catalyses N-acetyl-alpha-D-glucosamine 1-phosphate + UTP + H(+) = UDP-N-acetyl-alpha-D-glucosamine + diphosphate. It functions in the pathway nucleotide-sugar biosynthesis; UDP-N-acetyl-alpha-D-glucosamine biosynthesis; N-acetyl-alpha-D-glucosamine 1-phosphate from alpha-D-glucosamine 6-phosphate (route II): step 2/2. The protein operates within nucleotide-sugar biosynthesis; UDP-N-acetyl-alpha-D-glucosamine biosynthesis; UDP-N-acetyl-alpha-D-glucosamine from N-acetyl-alpha-D-glucosamine 1-phosphate: step 1/1. Its pathway is bacterial outer membrane biogenesis; LPS lipid A biosynthesis. Catalyzes the last two sequential reactions in the de novo biosynthetic pathway for UDP-N-acetylglucosamine (UDP-GlcNAc). The C-terminal domain catalyzes the transfer of acetyl group from acetyl coenzyme A to glucosamine-1-phosphate (GlcN-1-P) to produce N-acetylglucosamine-1-phosphate (GlcNAc-1-P), which is converted into UDP-GlcNAc by the transfer of uridine 5-monophosphate (from uridine 5-triphosphate), a reaction catalyzed by the N-terminal domain. The polypeptide is Bifunctional protein GlmU (Aliarcobacter butzleri (strain RM4018) (Arcobacter butzleri)).